A 184-amino-acid polypeptide reads, in one-letter code: CKLF-like MARVEL transmembrane domain-containing protein 3 (184 aa).

Residues 1–12 (MWPPDAEPEPDP) are compositionally biased toward acidic residues. Positions 1–22 (MWPPDAEPEPDPESAHGPRSGR) are disordered. The region spanning 36 to 155 (FLCSLKGRLL…DFYLIFNEVA (120 aa)) is the MARVEL domain. 3 consecutive transmembrane segments (helical) span residues 64 to 84 (ASAFLTVPLLEFLLAVYFLFA), 96 to 116 (LCWPMMDFLRCVTAALIYFVI), and 131 to 151 (AAGVFGFFATIVFAIDFYLIF). The interval 163 to 184 (SGNETTAHRTEEENSNSDSDSD) is disordered. Positions 175–184 (ENSNSDSDSD) are enriched in acidic residues.

The protein belongs to the chemokine-like factor family.

The protein resides in the membrane. This is CKLF-like MARVEL transmembrane domain-containing protein 3 (Cmtm3) from Mus musculus (Mouse).